The sequence spans 429 residues: Lysine-specific demethylase JMJ30 (429 aa).

The region spanning 272–429 is the JmjC domain; it reads SSPMEPTYLA…WSNEAESSSS (158 aa). Fe cation contacts are provided by His326, Asp328, and His405.

This sequence belongs to the JARID1 histone demethylase family. Interacts with EFM. Binds to ATXR2, ARF7 and ARF19. Fe(2+) serves as cofactor. In terms of tissue distribution, expressed ubiquitously in vasculatures, roots, rosette leaves, stems, inflorescences and siliques. Mainly present in the root meristem and root differentiation area. Observed at high level in callus.

The protein resides in the nucleus. Its subcellular location is the cytoplasm. It localises to the endoplasmic reticulum. The catalysed reaction is N(6),N(6),N(6)-trimethyl-L-lysyl(36)-[histone H3] + 2 2-oxoglutarate + 2 O2 = N(6)-methyl-L-lysyl(36)-[histone H3] + 2 formaldehyde + 2 succinate + 2 CO2. The enzyme catalyses N(6),N(6),N(6)-trimethyl-L-lysyl(27)-[histone H3] + 2 2-oxoglutarate + 2 O2 = N(6)-methyl-L-lysyl(27)-[histone H3] + 2 formaldehyde + 2 succinate + 2 CO2. It carries out the reaction N(6),N(6)-dimethyl-L-lysyl(36)-[histone H3] + 2 2-oxoglutarate + 2 O2 = L-lysyl(36)-[histone H3] + 2 formaldehyde + 2 succinate + 2 CO2. Functionally, histone demethylase that demethylates 'Lys-36' (H3K36me) of histone H3 with a specific activity for H3K36me3 and H3K36me2. Also active on 'Lys-27' (H3K27me) of histone H3 with a specific activity for H3K27me3 and H3K27me2. No activity on H3K36me1 and H3K27me1. Involved in the control of flowering time by demethylating H3K36me2 at the FT locus and repressing its expression. Acts within the central clock and contributes, in parallel with LUX, to temperature compensation, probably as a component of the evening complex, to maintain circadian period at increasing temperatures; this mechanism involves binding to and regulation of CCA1 and PRR7 promoters. Works in concert with TOC1 to promote the morning-phased clock genes CCA1 and LHY which function as components of the central oscillator. Together with JMJ32, regulates the flowering-repressor FLOWERING LOCUS C (FLC) locus by removing the repressive histone modification H3 lysine 27 trimethylation (H3K27me3), especially at elevated temperatures (e.g. 29 degrees Celsius), thus preventing extreme precocious flowering. JMJ30 and JMJ32 are regulators involved in the integration of abscisic acid (ABA) and brassinosteroids (BR) signaling pathways. Together with JMJ32, controls ABA-mediated growth arrest during the post-germination stage in unfavorable conditions, and responses to ABA during root development, via the removal of repressive histone mark (H3K27me3) from the SnRK2.8 promoter, thus promoting SnRK2.8 expression and subsequent kinase-dependent ABI3 activation. In addition, removes the repressive histone marks (H3K27me3) from the BZR1 locus in response to stress and ABA, thus activating the BR signaling pathway which, in turn, inhibits the ABA signaling pathway. Able to drive tissue identity changes to promote callus formation form somatic cells via a massive genome-wide chromatin remodeling (e.g. H3K9me3 demethylation) leading to the induction of Lateral organ Boundaries-Domain (LBD) genes (e.g. LBD16 and LBD29) that establish root primordia; when in complex with ARF proteins (e.g. ARF7 and ARF19), recruits ATXR2 which promotes the deposition of H3K36me3 at LBD genes promoters, thus ensuring their stable activation during callus formation. The chain is Lysine-specific demethylase JMJ30 from Arabidopsis thaliana (Mouse-ear cress).